The primary structure comprises 711 residues: Putative membrane protein IgaA homolog (711 aa).

Residue Met-1 is a topological domain, periplasmic. Residues 2–22 (STIVIFLAALLACSLLAGWLI) traverse the membrane as a helical segment. The Cytoplasmic segment spans residues 23–204 (KVRSRRRQLP…YALSRPRGLR (182 aa)). The next 2 membrane-spanning stretches (helical) occupy residues 205 to 225 (EALL…TPDV) and 226 to 246 (FVPW…WGLF). Residues 247–339 (APPAKSSLRE…KNFPLQHWLR (93 aa)) lie on the Cytoplasmic side of the membrane. A helical membrane pass occupies residues 340-360 (STIIAAGSLLVLFMLLFWIPL). Topologically, residues 361 to 655 (DMPLKFTLSW…IPDRSGLWRY (295 aa)) are periplasmic. Residues 656-676 (LSTTLLLLTMLGSAIYNGVQA) traverse the membrane as a helical segment. Residues 677 to 711 (WRRYQRHRTRMMKIQAYYESCLNPQLITPSESLIE) lie on the Cytoplasmic side of the membrane.

The protein belongs to the IgaA family.

It localises to the cell inner membrane. This Escherichia coli O157:H7 protein is Putative membrane protein IgaA homolog (yrfF).